The chain runs to 329 residues: Beta-ketoacyl-[acyl-carrier-protein] synthase III (329 aa).

Active-site residues include cysteine 123 and histidine 256. An ACP-binding region spans residues 257-261 (QANIR). Asparagine 286 is a catalytic residue.

It belongs to the thiolase-like superfamily. FabH family. Homodimer.

It is found in the cytoplasm. It catalyses the reaction malonyl-[ACP] + acetyl-CoA + H(+) = 3-oxobutanoyl-[ACP] + CO2 + CoA. The protein operates within lipid metabolism; fatty acid biosynthesis. Functionally, catalyzes the condensation reaction of fatty acid synthesis by the addition to an acyl acceptor of two carbons from malonyl-ACP. Catalyzes the first condensation reaction which initiates fatty acid synthesis and may therefore play a role in governing the total rate of fatty acid production. Possesses both acetoacetyl-ACP synthase and acetyl transacylase activities. Its substrate specificity determines the biosynthesis of branched-chain and/or straight-chain of fatty acids. This chain is Beta-ketoacyl-[acyl-carrier-protein] synthase III, found in Burkholderia cenocepacia (strain HI2424).